A 599-amino-acid polypeptide reads, in one-letter code: Putative sensor histidine kinase NtrY-like (599 aa).

The next 4 helical transmembrane spans lie at 17-37 (ILILALAIASIISVCTTFYVI), 44-64 (FSTIIGFLLIDLAIFLILGIL), 85-105 (IVIAFSLVAAIPTIIVSVFSV), and 285-305 (IMFIFIALLLLFVAINFGVLF). Residues 307–361 (AKIVKPIKKLVTATDKVKDGDLTVQVPENEVDKDEIGTLYAAFNRMIKQLSRQQR) form the HAMP domain. Residues 378 to 589 (KVAHEIKNPL…IIDIKFDLKE (212 aa)) enclose the Histidine kinase domain. The residue at position 381 (His381) is a Phosphohistidine; by autocatalysis.

It localises to the cell membrane. The catalysed reaction is ATP + protein L-histidine = ADP + protein N-phospho-L-histidine.. Functionally, member of the two-component regulatory system RP614/RP562. This chain is Putative sensor histidine kinase NtrY-like, found in Rickettsia prowazekii (strain Madrid E).